An 857-amino-acid polypeptide reads, in one-letter code: Elongation factor 2 (857 aa).

One can recognise a tr-type G domain in the interval 17–362 (ANIRNMSVIA…MITIHLPSPV (346 aa)). Residue 26–33 (AHVDHGKS) coordinates GTP. Phosphothreonine is present on residues threonine 54, threonine 57, and threonine 59. Lysine 152 is modified (N6-succinyllysine). GTP is bound by residues 158–161 (NKMD) and 216–218 (SGL). Lysine 235 is subject to N6-acetyllysine. Position 239 is an N6-acetyllysine; alternate (lysine 239). A Glycyl lysine isopeptide (Lys-Gly) (interchain with G-Cter in SUMO1); alternate cross-link involves residue lysine 239. A Phosphotyrosine modification is found at tyrosine 265. The residue at position 272 (lysine 272) is an N6-acetyllysine; alternate. N6-succinyllysine; alternate is present on lysine 272. Lysine 275 bears the N6-acetyllysine mark. Lysine 322 participates in a covalent cross-link: Glycyl lysine isopeptide (Lys-Gly) (interchain with G-Cter in SUMO). Position 325 is a phosphoserine (serine 325). The residue at position 373 (tyrosine 373) is a Phosphotyrosine. A Phosphothreonine modification is found at threonine 435. Residues lysine 439 and lysine 445 each carry the N6-acetyllysine modification. Phosphoserine is present on serine 502. Lysine 525 carries the N6,N6,N6-trimethyllysine modification. A Glycyl lysine isopeptide (Lys-Gly) (interchain with G-Cter in SUMO) cross-link involves residue lysine 529. Lysine 572 carries the N6-succinyllysine modification. Serine 595 carries the post-translational modification Phosphoserine. An N6-acetyllysine modification is found at lysine 619. Diphthamide is present on histidine 715.

The protein belongs to the GTP-binding elongation factor family. EF-G/EF-2 subfamily. As to quaternary structure, binds to 80S ribosomes. Actively translating ribosomes show mutually exclusive binding of eIF5a (EIF5A or EIF5A2) and EEF2/eEF2. Interacts with SERBP1; interaction sequesters EEF2/eEF2 at the A-site of the ribosome, thereby blocking the interaction sites of the mRNA-tRNA complex, promoting ribosome stabilization and hibernation. Interacts with HABP4; interaction takes place at the A-site of hibernating ribosomes and promotes ribosome stabilization. Component of the mRNA surveillance SURF complex, at least composed of ERF1, ERF3 (ERF3A or ERF3B), EEF2, UPF1/RENT1, SMG1, SMG8 and SMG9. Interacts with RBPMS2. Post-translationally, phosphorylation by EF-2 kinase completely inactivates EF-2; it requires prior phosphorylation by CDK2 at Ser-595 during mitotic prometaphase. Phosphorylation by CSK promotes SUMOylation, proteolytic cleavage, and nuclear translocation if the C-terminal fragment. Diphthamide is 2-[3-carboxyamido-3-(trimethyl-ammonio)propyl]histidine. In terms of processing, ISGylated. Post-translationally, proteolytically processed at two sites following phosphorylation by CSK. SUMOylated following phosphorylation by CSK, promotes proteolytic cleavage.

The protein localises to the cytoplasm. The protein resides in the nucleus. It carries out the reaction GTP + H2O = GDP + phosphate + H(+). Functionally, catalyzes the GTP-dependent ribosomal translocation step during translation elongation. During this step, the ribosome changes from the pre-translocational (PRE) to the post-translocational (POST) state as the newly formed A-site-bound peptidyl-tRNA and P-site-bound deacylated tRNA move to the P and E sites, respectively. Catalyzes the coordinated movement of the two tRNA molecules, the mRNA and conformational changes in the ribosome. The polypeptide is Elongation factor 2 (EEF2) (Oryctolagus cuniculus (Rabbit)).